The primary structure comprises 120 residues: Immunoglobulin kappa variable 2-112 (120 aa).

A signal peptide spans 1–20 (MRCSLQFLGVLMFWISGVSG). The tract at residues 21 to 43 (DIVITQDELSNPVTSGESVSISC) is framework-1. Cysteines 43 and 113 form a disulfide. The interval 44 to 59 (RSSKSLLYKDGKTYLN) is complementarity-determining-1. Residues 60–74 (WFLQRPGQSPQLLIY) form a framework-2 region. Residues 75-81 (LMSTRAS) form a complementarity-determining-2 region. The framework-3 stretch occupies residues 82–113 (GVSDRFSGSGSGTDFTLEISRVKAEDVGVYYC). Residues 114–120 (QQLVEYP) form a complementarity-determining-3 region.

The polypeptide is Immunoglobulin kappa variable 2-112 (Mus musculus (Mouse)).